Reading from the N-terminus, the 899-residue chain is Bifunctional uridylyltransferase/uridylyl-removing enzyme (899 aa).

A uridylyltransferase region spans residues 1-342 (MPQVDPDLFD…PGDAAGRVEP (342 aa)). The tract at residues 343–705 (LNERFQVRDG…TTQREFEGAT (363 aa)) is uridylyl-removing. Residues 461–583 (VDAHTLNLIK…VRDQTYLDYL (123 aa)) form the HD domain. ACT domains follow at residues 706 to 789 (QIFI…IIQR) and 816 to 899 (ILEI…RISI).

It belongs to the GlnD family. Mg(2+) is required as a cofactor.

It carries out the reaction [protein-PII]-L-tyrosine + UTP = [protein-PII]-uridylyl-L-tyrosine + diphosphate. The catalysed reaction is [protein-PII]-uridylyl-L-tyrosine + H2O = [protein-PII]-L-tyrosine + UMP + H(+). Uridylyltransferase (UTase) activity is inhibited by glutamine, while glutamine activates uridylyl-removing (UR) activity. In terms of biological role, modifies, by uridylylation and deuridylylation, the PII regulatory proteins (GlnB and homologs), in response to the nitrogen status of the cell that GlnD senses through the glutamine level. Under low glutamine levels, catalyzes the conversion of the PII proteins and UTP to PII-UMP and PPi, while under higher glutamine levels, GlnD hydrolyzes PII-UMP to PII and UMP (deuridylylation). Thus, controls uridylylation state and activity of the PII proteins, and plays an important role in the regulation of nitrogen fixation and metabolism. This chain is Bifunctional uridylyltransferase/uridylyl-removing enzyme, found in Azotobacter vinelandii (strain DJ / ATCC BAA-1303).